A 249-amino-acid polypeptide reads, in one-letter code: Small ribosomal subunit protein uS2 (249 aa).

Belongs to the universal ribosomal protein uS2 family.

The chain is Small ribosomal subunit protein uS2 from Bordetella avium (strain 197N).